We begin with the raw amino-acid sequence, 211 residues long: Probable transcription repressor protein RGM1 (211 aa).

The Nuclear localization signal motif lies at 6–11; it reads PKRNKD. 2 consecutive C2H2-type zinc fingers follow at residues 19–44 and 50–73; these read YRCV…IRKH and FQCN…SSVH. Residues 178–211 are disordered; it reads NIVELPPDSSDTPASPSKVQSFDQAKDASPNAKK. The segment covering 183 to 194 has biased composition (low complexity); it reads PPDSSDTPASPS.

Its subcellular location is the nucleus. The protein is Probable transcription repressor protein RGM1 (RGM1) of Saccharomyces cerevisiae (strain ATCC 204508 / S288c) (Baker's yeast).